A 225-amino-acid polypeptide reads, in one-letter code: tRNA 2'-phosphotransferase 1 (225 aa).

The tract at residues 1-21 is disordered; it reads MDCETRGRGRRGRGNRNEESR.

Belongs to the KptA/TPT1 family.

The enzyme catalyses 2'-phospho-[ligated tRNA] + NAD(+) = mature tRNA + ADP-alpha-D-ribose 1'',2''-cyclic phosphate + nicotinamide. In terms of biological role, catalyzes the last step of tRNA splicing, the transfer of the splice junction 2'-phosphate from ligated tRNA to NAD to produce ADP-ribose 1''-2'' cyclic phosphate. The sequence is that of tRNA 2'-phosphotransferase 1 (trpt1) from Danio rerio (Zebrafish).